The sequence spans 984 residues: Mineralocorticoid receptor (984 aa).

A modulating region spans residues 1 to 602 (METKGYHSLP…STGSSRPSKI (602 aa)). Over residues 231–243 (QGTPLTCSPNVEN) the composition is skewed to polar residues. 2 disordered regions span residues 231 to 329 (QGTP…AAST) and 347 to 373 (GTSA…QEVP). 5 positions are modified to phosphoserine: Ser250, Ser259, Ser283, Ser287, and Ser299. Positions 259–291 (SPLSSPLSSMKSSISSPPSHCSVKSPVSSPNNV) are enriched in low complexity. Residues 292–329 (TLRSSVSSPANINNSRCSVSSPSNTNNRSTLSSPAAST) are compositionally biased toward polar residues. Positions 603, 606, 620, 623, 639, 645, 655, and 658 each coordinate Zn(2+). 2 NR C4-type zinc fingers span residues 603 to 623 (CLVC…CGSC) and 639 to 663 (CAGR…LQKC). The segment at residues 603 to 668 (CLVCGDEASG…RLQKCLQAGM (66 aa)) is a DNA-binding region (nuclear receptor). The segment at 669–725 (NLGARKSKKLGKLKGIHEEQPQQQQPPPPPPPPQSPEEGTTYIAPAKEPSVNTALVP) is hinge. A disordered region spans residues 684–710 (IHEEQPQQQQPPPPPPPPQSPEEGTTY). Over residues 692-703 (QQPPPPPPPPQS) the composition is skewed to pro residues. One can recognise an NR LBD domain in the interval 726–964 (QLSTISRALT…EFPAMLVEII (239 aa)). 2 residues coordinate 21-hydroxyprogesterone: Asn770 and Gln776. The aldosterone site is built by Asn770 and Gln776. Positions 770 and 776 each coordinate progesterone. The segment at 782 to 785 (KWAK) is important for coactivator binding. The 21-hydroxyprogesterone site is built by Arg817 and Thr945. Aldosterone contacts are provided by Arg817 and Thr945. Residues Arg817 and Thr945 each contribute to the progesterone site.

Belongs to the nuclear hormone receptor family. NR3 subfamily. In terms of assembly, heteromultimeric cytoplasmic complex with HSP90, HSP70, and FKBP4, in the absence of ligand. After ligand binding, it translocates to the nucleus and binds to DNA as a homodimer and as a heterodimer with NR3C1. May interact with HSD11B2 in the absence of ligand. Binds the coactivators NCOA1, NCOA2, TIF1 and NRIP1. Post-translationally, phosphorylated. In terms of tissue distribution, ubiquitous. Highly expressed in distal tubules, convoluted tubules and cortical collecting duct in kidney, and in sweat glands. Detected at lower levels in cardiomyocytes, in epidermis and in colon enterocytes.

The protein localises to the cytoplasm. It localises to the nucleus. The protein resides in the endoplasmic reticulum membrane. In terms of biological role, receptor for both mineralocorticoids (MC) such as aldosterone and glucocorticoids (GC) such as corticosterone or cortisol. Binds to mineralocorticoid response elements (MRE) and transactivates target genes. The effect of MC is to increase ion and water transport and thus raise extracellular fluid volume and blood pressure and lower potassium levels. The polypeptide is Mineralocorticoid receptor (NR3C2) (Homo sapiens (Human)).